The chain runs to 283 residues: Dihydropteroate synthase type-1 (283 aa).

The Pterin-binding domain maps to 6–262 (VTVFGILNLT…APGDLRSAIT (257 aa)). N13 contacts Mg(2+). (7,8-dihydropterin-6-yl)methyl diphosphate is bound by residues D86, N105, D177, K216, and 250–252 (RTH).

This sequence belongs to the DHPS family. In terms of assembly, homodimer or homotrimer. It depends on Mg(2+) as a cofactor.

The catalysed reaction is (7,8-dihydropterin-6-yl)methyl diphosphate + 4-aminobenzoate = 7,8-dihydropteroate + diphosphate. Its pathway is cofactor biosynthesis; tetrahydrofolate biosynthesis; 7,8-dihydrofolate from 2-amino-4-hydroxy-6-hydroxymethyl-7,8-dihydropteridine diphosphate and 4-aminobenzoate: step 1/2. Catalyzes the condensation of para-aminobenzoate (pABA) with 6-hydroxymethyl-7,8-dihydropterin diphosphate (DHPt-PP) to form 7,8-dihydropteroate (H2Pte), the immediate precursor of folate derivatives. Implicated in resistance to sulfonamide. This Mycolicibacterium fortuitum (Mycobacterium fortuitum) protein is Dihydropteroate synthase type-1 (sulI).